We begin with the raw amino-acid sequence, 803 residues long: Phosphoribosylformylglycinamidine synthase subunit PurL (803 aa).

The active site involves His-65. The ATP site is built by Tyr-68 and Lys-107. Position 109 (Glu-109) interacts with Mg(2+). Residues 110 to 113 (SHNH) and Arg-132 contribute to the substrate site. Catalysis depends on His-111, which acts as the Proton acceptor. Asp-133 lines the Mg(2+) pocket. Gln-256 contacts substrate. A Mg(2+)-binding site is contributed by Asp-284. Residue 328–330 (ESQ) coordinates substrate. ATP is bound by residues Asn-537 and Gly-574. Asn-575 serves as a coordination point for Mg(2+). A substrate-binding site is contributed by Ser-577.

Belongs to the FGAMS family. Monomer. Part of the FGAM synthase complex composed of 1 PurL, 1 PurQ and 2 PurS subunits.

It localises to the cytoplasm. The enzyme catalyses N(2)-formyl-N(1)-(5-phospho-beta-D-ribosyl)glycinamide + L-glutamine + ATP + H2O = 2-formamido-N(1)-(5-O-phospho-beta-D-ribosyl)acetamidine + L-glutamate + ADP + phosphate + H(+). It participates in purine metabolism; IMP biosynthesis via de novo pathway; 5-amino-1-(5-phospho-D-ribosyl)imidazole from N(2)-formyl-N(1)-(5-phospho-D-ribosyl)glycinamide: step 1/2. Functionally, part of the phosphoribosylformylglycinamidine synthase complex involved in the purines biosynthetic pathway. Catalyzes the ATP-dependent conversion of formylglycinamide ribonucleotide (FGAR) and glutamine to yield formylglycinamidine ribonucleotide (FGAM) and glutamate. The FGAM synthase complex is composed of three subunits. PurQ produces an ammonia molecule by converting glutamine to glutamate. PurL transfers the ammonia molecule to FGAR to form FGAM in an ATP-dependent manner. PurS interacts with PurQ and PurL and is thought to assist in the transfer of the ammonia molecule from PurQ to PurL. The sequence is that of Phosphoribosylformylglycinamidine synthase subunit PurL from Prochlorococcus marinus (strain NATL2A).